A 356-amino-acid polypeptide reads, in one-letter code: sn-glycerol-3-phosphate import ATP-binding protein UgpC (356 aa).

Residues 4 to 235 (LKLQAVTKSW…PASLFVASFI (232 aa)) enclose the ABC transporter domain. 37–44 (GPSGCGKS) is a binding site for ATP.

This sequence belongs to the ABC transporter superfamily. sn-glycerol-3-phosphate importer (TC 3.A.1.1.3) family. In terms of assembly, the complex is composed of two ATP-binding proteins (UgpC), two transmembrane proteins (UgpA and UgpE) and a solute-binding protein (UgpB).

The protein resides in the cell inner membrane. The enzyme catalyses sn-glycerol 3-phosphate(out) + ATP + H2O = sn-glycerol 3-phosphate(in) + ADP + phosphate + H(+). In terms of biological role, part of the ABC transporter complex UgpBAEC involved in sn-glycerol-3-phosphate (G3P) import. Responsible for energy coupling to the transport system. This chain is sn-glycerol-3-phosphate import ATP-binding protein UgpC, found in Escherichia coli O6:K15:H31 (strain 536 / UPEC).